A 712-amino-acid polypeptide reads, in one-letter code: Lactoperoxidase (712 aa).

A signal peptide spans Met1–Ser22. Residues Asp23 to Arg100 constitute a propeptide that is removed on maturation. N-linked (GlcNAc...) asparagine glycosylation is present at Asn106. Intrachain disulfides connect Cys123–Cys284, Cys132–Cys145, Cys246–Cys256, and Cys250–Cys274. Asn212 is a glycosylation site (N-linked (GlcNAc...) asparagine). Residue Asp225 coordinates heme b. The active-site Proton acceptor is the His226. Asp227 is a Ca(2+) binding site. The Ca(2+) site is built by Thr301, Phe303, Asp305, and Ser307. Ser315 is subject to Phosphoserine. Residues Asn322 and Asn358 are each glycosylated (N-linked (GlcNAc...) asparagine). Cysteines 354 and 365 form a disulfide. Glu375 provides a ligand contact to heme b. Residue Asn449 is glycosylated (N-linked (GlcNAc...) asparagine). His468 contributes to the heme b binding site. Tyr482 carries the 3'-nitrotyrosine modification. 2 disulfide bridges follow: Cys573–Cys630 and Cys671–Cys696.

The protein belongs to the peroxidase family. XPO subfamily. Ca(2+) serves as cofactor. It depends on heme b as a cofactor. Mammary gland; milk.

The protein localises to the secreted. Its subcellular location is the cytoplasm. It carries out the reaction 2 a phenolic donor + H2O2 = 2 a phenolic radical donor + 2 H2O. It catalyses the reaction thiocyanate + H2O2 + H(+) = hypothiocyanous acid + H2O. The catalysed reaction is iodide + H2O2 = hypoiodite + H2O. Functionally, heme-containing oxidoreductase which catalyzes the conversion of thiocyanate (SCN(-)) into antimicrobial agent hypothiocyanous acid (OSCN(-)) in the presence of hydrogen peroxide (H2O2). Also involved in the conversion of iodide (I(-)) into hypoiodite (IO(-)) in the presence of H2O2. Responsible for the inactivation of a wide range of micro-organisms and hence, important component of defense mechanism. The lactoperoxidase-SCN(-)-H2O2 system shows antibacterial properties against some streptococci strains. The lactoperoxidase-I(-)-H2O2 system shows antibacterial properties against E.coli. May protect the udder from infection and may promote growth in newborns. May be implicated in airway host defense against infection. May contribute to maintaining an appropriate H2O2 cellular level, therefore protecting cells from H2O2-caused injuries and inflammation. The polypeptide is Lactoperoxidase (LPO) (Bos taurus (Bovine)).